The sequence spans 1096 residues: DNA-directed RNA polymerase subunit beta (1096 aa).

Residues 1069-1096 (DLMQDVNPRRSTPSRPTYESLGSDYQED) are disordered.

It belongs to the RNA polymerase beta chain family. In cyanobacteria the RNAP catalytic core is composed of 2 alpha, 1 beta, 1 beta', 1 gamma and 1 omega subunit. When a sigma factor is associated with the core the holoenzyme is formed, which can initiate transcription.

The enzyme catalyses RNA(n) + a ribonucleoside 5'-triphosphate = RNA(n+1) + diphosphate. Functionally, DNA-dependent RNA polymerase catalyzes the transcription of DNA into RNA using the four ribonucleoside triphosphates as substrates. This Prochlorococcus marinus (strain SARG / CCMP1375 / SS120) protein is DNA-directed RNA polymerase subunit beta.